The following is a 533-amino-acid chain: Probable G-protein coupled receptor Mth-like 14 (533 aa).

The signal sequence occupies residues 1–23 (MNLGHWNFLLALISLQTFFNASA). 5 N-linked (GlcNAc...) asparagine glycosylation sites follow: N20, N29, N30, N36, and N47. At 24–242 (QISTVNNSSK…QVEEQIAFAK (219 aa)) the chain is on the extracellular side. Positions 86–108 (VQSPVDNPLDPADCSQREKYRKQ) are disordered. Cysteines 120 and 216 form a disulfide. 3 N-linked (GlcNAc...) asparagine glycosylation sites follow: N133, N178, and N206. The helical transmembrane segment at 243–263 (VVFVAVLMLISMPCLLLVSYL) threads the bilayer. The Cytoplasmic portion of the chain corresponds to 264 to 279 (HMTLRLLRNLHGLSLS). The helical transmembrane segment at 280–300 (LMSLCLASGYFVHSVVHIYGI) threads the bilayer. At 301-303 (PNQ) the chain is on the extracellular side. A helical membrane pass occupies residues 304–324 (GFIGYVIQFCILSYFFWYLCI). Topologically, residues 325–347 (CFNVLLNVWYKLPCCIQCSKSWA) are cytoplasmic. The chain crosses the membrane as a helical span at residues 348–368 (TFNFACYAVFAFSGPATIVAL). Over 369 to 395 (TVQKGLPGMPSYFLQGLTESIRDSQRY) the chain is Extracellular. A helical membrane pass occupies residues 396-416 (FIPPVSTILFLSFLLNIISFF). The Cytoplasmic portion of the chain corresponds to 417–451 (GFQRISGYAKAEKNIQERKCLFDQQKYEDVKKDAK). A helical membrane pass occupies residues 452–472 (CVSLLGIIMVVSWLLEIITFY). The Extracellular portion of the chain corresponds to 473-480 (SGSNSNYL). Residues 481 to 501 (ILCDMVNGLQGVWVLLIFLVV) traverse the membrane as a helical segment. The Cytoplasmic segment spans residues 502 to 533 (RRRRTIILRWWYDRGSHEIEGTELQALSNSPT).

Belongs to the G-protein coupled receptor 2 family. Mth subfamily.

Its subcellular location is the cell membrane. The sequence is that of Probable G-protein coupled receptor Mth-like 14 (mthl14) from Drosophila melanogaster (Fruit fly).